The primary structure comprises 305 residues: Glycine--tRNA ligase alpha subunit (305 aa).

This sequence belongs to the class-II aminoacyl-tRNA synthetase family. Tetramer of two alpha and two beta subunits.

The protein resides in the cytoplasm. It catalyses the reaction tRNA(Gly) + glycine + ATP = glycyl-tRNA(Gly) + AMP + diphosphate. The protein is Glycine--tRNA ligase alpha subunit of Streptococcus uberis (strain ATCC BAA-854 / 0140J).